A 549-amino-acid polypeptide reads, in one-letter code: CTP synthase (549 aa).

Residues 1–267 are amidoligase domain; sequence MAKFVFITGG…CREVLDVLNL (267 aa). Ser-13 contributes to the CTP binding site. Ser-13 serves as a coordination point for UTP. Residues 14 to 19 and Asp-71 each bind ATP; that span reads SIGKGI. Mg(2+) contacts are provided by Asp-71 and Glu-141. CTP is bound by residues 148 to 150, 188 to 193, and Lys-224; these read DIE and KTKPTQ. Residues 188–193 and Lys-224 each bind UTP; that span reads KTKPTQ. One can recognise a Glutamine amidotransferase type-1 domain in the interval 292–534; sequence KIALVGKYVQ…IEAAQQRLPD (243 aa). An L-glutamine-binding site is contributed by Gly-354. Cys-381 functions as the Nucleophile; for glutamine hydrolysis in the catalytic mechanism. L-glutamine-binding positions include 382–385, Glu-405, and Arg-462; that span reads LGMQ. Active-site residues include His-507 and Glu-509.

Belongs to the CTP synthase family. Homotetramer.

The catalysed reaction is UTP + L-glutamine + ATP + H2O = CTP + L-glutamate + ADP + phosphate + 2 H(+). It catalyses the reaction L-glutamine + H2O = L-glutamate + NH4(+). The enzyme catalyses UTP + NH4(+) + ATP = CTP + ADP + phosphate + 2 H(+). It participates in pyrimidine metabolism; CTP biosynthesis via de novo pathway; CTP from UDP: step 2/2. Allosterically activated by GTP, when glutamine is the substrate; GTP has no effect on the reaction when ammonia is the substrate. The allosteric effector GTP functions by stabilizing the protein conformation that binds the tetrahedral intermediate(s) formed during glutamine hydrolysis. Inhibited by the product CTP, via allosteric rather than competitive inhibition. Functionally, catalyzes the ATP-dependent amination of UTP to CTP with either L-glutamine or ammonia as the source of nitrogen. Regulates intracellular CTP levels through interactions with the four ribonucleotide triphosphates. This chain is CTP synthase, found in Synechococcus sp. (strain CC9605).